The following is a 276-amino-acid chain: Undecaprenyl-diphosphatase (276 aa).

The next 7 membrane-spanning stretches (helical) occupy residues 42–62 (AVTAFTAVIQMGAILAAIVYF), 88–108 (ALLGWYVIAGTIPIGLAGYLG), 116–136 (LRSLWYVVAGLVLWSIAIVYA), 149–169 (MRLPDAVFIGVIQVLALVPGV), 187–207 (VAATRFSFLLAIPALLAAGIF), 222–242 (SLVVGTGMAFLTAYASIAWLL), and 253–273 (FVWYRVTVAVFVVAALTTGLV).

Belongs to the UppP family.

The protein resides in the cell membrane. It carries out the reaction di-trans,octa-cis-undecaprenyl diphosphate + H2O = di-trans,octa-cis-undecaprenyl phosphate + phosphate + H(+). Functionally, catalyzes the dephosphorylation of undecaprenyl diphosphate (UPP). Confers resistance to bacitracin. The polypeptide is Undecaprenyl-diphosphatase (Acidothermus cellulolyticus (strain ATCC 43068 / DSM 8971 / 11B)).